A 128-amino-acid polypeptide reads, in one-letter code: Small ribosomal subunit protein bS6 (128 aa).

It belongs to the bacterial ribosomal protein bS6 family.

In terms of biological role, binds together with bS18 to 16S ribosomal RNA. In Thermotoga petrophila (strain ATCC BAA-488 / DSM 13995 / JCM 10881 / RKU-1), this protein is Small ribosomal subunit protein bS6.